The sequence spans 111 residues: MADWTRAQSSGAVEDILDRENKRMADSLASKVTRLKSLALDIDRDTEDQNRYLDGMDSDFTSVTGLLTGSVKRFSTMARSGRDNRKLLCGMAVVLIVAFFILSYLLSRTRT.

The Cytoplasmic segment spans residues 1 to 86; it reads MADWTRAQSS…MARSGRDNRK (86 aa). Residues serine 9 and serine 37 each carry the phosphoserine modification. The t-SNARE coiled-coil homology domain maps to 15-77; the sequence is DILDRENKRM…TGSVKRFSTM (63 aa). A helical; Anchor for type IV membrane protein transmembrane segment spans residues 87–107; the sequence is LLCGMAVVLIVAFFILSYLLS. Topologically, residues 108–111 are lumenal; the sequence is RTRT.

In terms of assembly, component of a SNARE complex consisting of STX5, YKT6, GOSR1 and BET1L. Interacts with STX5.

It is found in the golgi apparatus membrane. The protein resides in the golgi apparatus. The protein localises to the trans-Golgi network membrane. In terms of biological role, vesicle SNARE required for targeting and fusion of retrograde transport vesicles with the Golgi complex. Required for the integrity of the Golgi complex. The chain is BET1-like protein from Mus musculus (Mouse).